The following is a 403-amino-acid chain: Probable tRNA sulfurtransferase (403 aa).

One can recognise a THUMP domain in the interval 60–165; sequence QLAEERLKPI…KEGVFLSCRT (106 aa). ATP contacts are provided by residues 183-184, 208-209, R265, G287, and Q296; these read ML and HF.

The protein belongs to the ThiI family.

The protein localises to the cytoplasm. The enzyme catalyses [ThiI sulfur-carrier protein]-S-sulfanyl-L-cysteine + a uridine in tRNA + 2 reduced [2Fe-2S]-[ferredoxin] + ATP + H(+) = [ThiI sulfur-carrier protein]-L-cysteine + a 4-thiouridine in tRNA + 2 oxidized [2Fe-2S]-[ferredoxin] + AMP + diphosphate. The catalysed reaction is [ThiS sulfur-carrier protein]-C-terminal Gly-Gly-AMP + S-sulfanyl-L-cysteinyl-[cysteine desulfurase] + AH2 = [ThiS sulfur-carrier protein]-C-terminal-Gly-aminoethanethioate + L-cysteinyl-[cysteine desulfurase] + A + AMP + 2 H(+). Its pathway is cofactor biosynthesis; thiamine diphosphate biosynthesis. Catalyzes the ATP-dependent transfer of a sulfur to tRNA to produce 4-thiouridine in position 8 of tRNAs, which functions as a near-UV photosensor. Also catalyzes the transfer of sulfur to the sulfur carrier protein ThiS, forming ThiS-thiocarboxylate. This is a step in the synthesis of thiazole, in the thiamine biosynthesis pathway. The sulfur is donated as persulfide by IscS. The polypeptide is Probable tRNA sulfurtransferase (Listeria innocua serovar 6a (strain ATCC BAA-680 / CLIP 11262)).